The chain runs to 139 residues: Superoxide dismutase [Cu-Zn] (139 aa).

The S-palmitoyl cysteine moiety is linked to residue cysteine 6. Cu cation contacts are provided by histidine 47 and histidine 49. Residues histidine 72, histidine 81, and aspartate 84 each coordinate Zn(2+). Residue histidine 114 participates in Cu cation binding. Residues 118–129 (DDLGKGGNDESL) are compositionally biased toward basic and acidic residues. Positions 118 to 139 (DDLGKGGNDESLKTGNAGGRMA) are disordered.

The protein belongs to the Cu-Zn superoxide dismutase family. In terms of assembly, homodimer. The cofactor is Cu cation. It depends on Zn(2+) as a cofactor.

It localises to the cytoplasm. The protein resides in the nucleus. The catalysed reaction is 2 superoxide + 2 H(+) = H2O2 + O2. Destroys radicals which are normally produced within the cells and which are toxic to biological systems. This chain is Superoxide dismutase [Cu-Zn] (sod1), found in Lampanyctus crocodilus (Jewel lanternfish).